A 223-amino-acid polypeptide reads, in one-letter code: Zinc-finger homeodomain protein 12 (223 aa).

Residues 1–20 (MSSLSKPNRQFLSPTTNNQD) show a composition bias toward polar residues. The interval 1-24 (MSSLSKPNRQFLSPTTNNQDTGRE) is disordered. The segment at 37-88 (YNECLKNHAVSLGGHALDGCGEFTPKSTTILTDPPSLRCDACGCHRNFHRRS) adopts a ZF-HD dimerization-type; degenerate zinc-finger fold. The homeobox; atypical DNA-binding region spans 147-204 (KKHKRTKFTAEQKVKMRGFAERAGWKINGWDEKWVREFCSEVGIERKVLKVWIHNNKY).

Homo- and heterodimer with other ZFHD proteins. Interacts with ZHD11.

It localises to the nucleus. Functionally, putative transcription factor. The chain is Zinc-finger homeodomain protein 12 (ZHD12) from Arabidopsis thaliana (Mouse-ear cress).